The following is a 92-amino-acid chain: Small ribosomal subunit protein uS19 (92 aa).

It belongs to the universal ribosomal protein uS19 family.

Its function is as follows. Protein S19 forms a complex with S13 that binds strongly to the 16S ribosomal RNA. The chain is Small ribosomal subunit protein uS19 from Borrelia recurrentis (strain A1).